The sequence spans 115 residues: MNVMLALLTNTLLSTLLVLIAFWLPQLNIYAEKASPYECGFDPMGSARLPFSMKFFLVAITFLLFDLEIALLLPLPWASQTDKLPTMLTMALLLISLLAASLAYEWTQKGLEWTE.

The next 3 membrane-spanning stretches (helical) occupy residues 3–23 (VMLA…IAFW), 55–75 (FFLV…LLPL), and 84–104 (LPTM…SLAY).

Belongs to the complex I subunit 3 family. Core subunit of respiratory chain NADH dehydrogenase (Complex I) which is composed of 45 different subunits. Interacts with TMEM186. Interacts with TMEM242.

It is found in the mitochondrion inner membrane. It carries out the reaction a ubiquinone + NADH + 5 H(+)(in) = a ubiquinol + NAD(+) + 4 H(+)(out). Its function is as follows. Core subunit of the mitochondrial membrane respiratory chain NADH dehydrogenase (Complex I) which catalyzes electron transfer from NADH through the respiratory chain, using ubiquinone as an electron acceptor. Essential for the catalytic activity of complex I. In Felis catus (Cat), this protein is NADH-ubiquinone oxidoreductase chain 3.